The chain runs to 485 residues: Sulfated surface glycoprotein 185 (485 aa).

Residues 1-20 (MSKLLLVALFGAIAVVATSA) form the signal peptide. A glycan (N-linked (GlcNAc...) asparagine) is linked at Asn193. Residues 212–317 (LSGPNVNPIG…PPVPPPPSPP (106 aa)) form a disordered region. Pro residues-rich tracts occupy residues 221–234 (GPAPNNSPLPPSPQ) and 241–317 (PPSP…PSPP). N-linked (GlcNAc...) asparagine glycosylation occurs at Asn347.

As to quaternary structure, polymer. In terms of processing, intersubunit cross-links are formed between saccharide chains rather than between polypeptide chains. Post-translationally, hydroxylated on proline residues in the Pro-rich central domain. Glycosylated; contains sulfate-substituted glycans.

In terms of biological role, the extracellular matrix (ECM) of Volvox contains insoluble fibrous layers that surround individual cells at a distance to form contiguous cellular compartments. SSG 185 is the monomeric precursor of this substructure (C3Z structure). In Volvox carteri (Green alga), this protein is Sulfated surface glycoprotein 185.